A 338-amino-acid polypeptide reads, in one-letter code: DNA-directed RNA polymerase subunit alpha (338 aa).

The alpha N-terminal domain (alpha-NTD) stretch occupies residues 1-225 (MLISQRPTIT…ELFGLARELN (225 aa)). Residues 242–338 (YIAAYSMPIE…YIDVEAEDSE (97 aa)) are alpha C-terminal domain (alpha-CTD). The disordered stretch occupies residues 319–338 (LEGYDAETGGYIDVEAEDSE).

Belongs to the RNA polymerase alpha chain family. In terms of assembly, homodimer. The RNAP catalytic core consists of 2 alpha, 1 beta, 1 beta' and 1 omega subunit. When a sigma factor is associated with the core the holoenzyme is formed, which can initiate transcription.

It catalyses the reaction RNA(n) + a ribonucleoside 5'-triphosphate = RNA(n+1) + diphosphate. Functionally, DNA-dependent RNA polymerase catalyzes the transcription of DNA into RNA using the four ribonucleoside triphosphates as substrates. The chain is DNA-directed RNA polymerase subunit alpha from Corynebacterium glutamicum (strain ATCC 13032 / DSM 20300 / JCM 1318 / BCRC 11384 / CCUG 27702 / LMG 3730 / NBRC 12168 / NCIMB 10025 / NRRL B-2784 / 534).